A 378-amino-acid polypeptide reads, in one-letter code: Carbamoyl phosphate synthase small chain (378 aa).

The interval 1–189 (MTKPAILALA…DSHPEIAASE (189 aa)) is CPSase. L-glutamine contacts are provided by serine 47, glycine 241, and glycine 243. The Glutamine amidotransferase type-1 domain occupies 193–378 (HVVAYDYGVK…RFIDAMAKRR (186 aa)). The Nucleophile role is filled by cysteine 269. L-glutamine-binding residues include leucine 270, glutamine 273, asparagine 311, glycine 313, and phenylalanine 314. Active-site residues include histidine 353 and glutamate 355.

This sequence belongs to the CarA family. Composed of two chains; the small (or glutamine) chain promotes the hydrolysis of glutamine to ammonia, which is used by the large (or ammonia) chain to synthesize carbamoyl phosphate. Tetramer of heterodimers (alpha,beta)4.

It catalyses the reaction hydrogencarbonate + L-glutamine + 2 ATP + H2O = carbamoyl phosphate + L-glutamate + 2 ADP + phosphate + 2 H(+). The enzyme catalyses L-glutamine + H2O = L-glutamate + NH4(+). It participates in amino-acid biosynthesis; L-arginine biosynthesis; carbamoyl phosphate from bicarbonate: step 1/1. It functions in the pathway pyrimidine metabolism; UMP biosynthesis via de novo pathway; (S)-dihydroorotate from bicarbonate: step 1/3. In terms of biological role, small subunit of the glutamine-dependent carbamoyl phosphate synthetase (CPSase). CPSase catalyzes the formation of carbamoyl phosphate from the ammonia moiety of glutamine, carbonate, and phosphate donated by ATP, constituting the first step of 2 biosynthetic pathways, one leading to arginine and/or urea and the other to pyrimidine nucleotides. The small subunit (glutamine amidotransferase) binds and cleaves glutamine to supply the large subunit with the substrate ammonia. In Pseudomonas syringae pv. tomato (strain ATCC BAA-871 / DC3000), this protein is Carbamoyl phosphate synthase small chain.